The primary structure comprises 340 residues: Phosphoribosylformylglycinamidine cyclo-ligase (340 aa).

It belongs to the AIR synthase family.

It is found in the cytoplasm. The enzyme catalyses 2-formamido-N(1)-(5-O-phospho-beta-D-ribosyl)acetamidine + ATP = 5-amino-1-(5-phospho-beta-D-ribosyl)imidazole + ADP + phosphate + H(+). The protein operates within purine metabolism; IMP biosynthesis via de novo pathway; 5-amino-1-(5-phospho-D-ribosyl)imidazole from N(2)-formyl-N(1)-(5-phospho-D-ribosyl)glycinamide: step 2/2. In Streptococcus pyogenes serotype M18 (strain MGAS8232), this protein is Phosphoribosylformylglycinamidine cyclo-ligase.